The following is a 35-amino-acid chain: MSDINATRLPIIIVLGLIIPLCVSDIEMILTRGER.

The propeptide occupies 1–10 (MSDINATRLP). A cross-link (cyclopeptide (Ile-Pro)) is located at residues 11-20 (IIIVLGLIIP). A propeptide spanning residues 21–35 (LCVSDIEMILTRGER) is cleaved from the precursor.

Belongs to the MSDIN fungal toxin family. Post-translationally, processed by the macrocyclase-peptidase enzyme POPB to yield a toxic cyclic decapeptide. POPB first removes 10 residues from the N-terminus. Conformational trapping of the remaining peptide forces the enzyme to release this intermediate rather than proceed to macrocyclization. The enzyme rebinds the remaining peptide in a different conformation and catalyzes macrocyclization of the N-terminal 10 residues.

In terms of biological role, probable toxin that belongs to the MSDIN-like toxin family responsible for a large number of food poisoning cases and deaths. The sequence is that of MSDIN-like toxin proprotein 1 from Amanita rimosa.